The following is a 98-amino-acid chain: MDARDIILRPVVTEKSMNLMDDKKYTFDVLVSATKTQVRNAVEEIFDVKVKNVNIMNVRGKEKRVGRYTGKTARRRKAIVTLTEDSNDIKIFNDNKEN.

Belongs to the universal ribosomal protein uL23 family. As to quaternary structure, part of the 50S ribosomal subunit. Contacts protein L29, and trigger factor when it is bound to the ribosome.

Its function is as follows. One of the early assembly proteins it binds 23S rRNA. One of the proteins that surrounds the polypeptide exit tunnel on the outside of the ribosome. Forms the main docking site for trigger factor binding to the ribosome. The protein is Large ribosomal subunit protein uL23 of Lactobacillus gasseri (strain ATCC 33323 / DSM 20243 / BCRC 14619 / CIP 102991 / JCM 1131 / KCTC 3163 / NCIMB 11718 / NCTC 13722 / AM63).